The primary structure comprises 561 residues: Carbohydrate sulfotransferase 15 (561 aa).

Residues 1-80 (MRHCINCCVQ…FLRFRKGKRC (80 aa)) lie on the Cytoplasmic side of the membrane. Residues 81-101 (SLVFGLIIMTLVMASYILSGA) traverse the membrane as a helical; Signal-anchor for type II membrane protein segment. The Lumenal segment spans residues 102 to 561 (HQELLISSPF…DDEAFAWKTT (460 aa)). 3'-phosphoadenylyl sulfate is bound at residue 263–267 (KCGTT). Asn-364 carries an N-linked (GlcNAc...) asparagine glycan. 3'-phosphoadenylyl sulfate contacts are provided by Arg-392 and Ser-400.

It belongs to the sulfotransferase 1 family. As to quaternary structure, homodimer; disulfide-linked (Potential). The relevance of homodimerization is however unsure. May interact with phosphorylated proteins in resting B-cells, including HCK. Requires a divalent metal cation as cofactor. Glutathione is required as a cofactor. In terms of processing, glycosylated.

It localises to the golgi apparatus membrane. It carries out the reaction dermatan 4'-sulfate + n 3'-phosphoadenylyl sulfate = dermatan 4',6'-bissulfate + n adenosine 3',5'-bisphosphate + n H(+). The catalysed reaction is chondroitin 4'-sulfate + n 3'-phosphoadenylyl sulfate = chondroitin 4',6'-bissulfate + n adenosine 3',5'-bisphosphate + n H(+). Inhibited by phenyl beta-GalNAc(4,6-SO(4)). Sulfotransferase that transfers sulfate from 3'-phosphoadenosine 5'-phosphosulfate (PAPS) to the C-6 hydroxyl group of the GalNAc 4-sulfate residue of chondroitin sulfate A and forms chondroitin sulfate E containing GlcA-GalNAc(4,6-SO(4)) repeating units. It also transfers sulfate to a unique non-reducing terminal sequence, GalNAc(4SO4)-GlcA(2SO4)-GalNAc(6SO4), to yield a highly sulfated structure similar to the structure found in thrombomodulin chondroitin sulfate. May also act as a B-cell receptor involved in BCR ligation-mediated early activation that mediate regulatory signals key to B-cell development and/or regulation of B-cell-specific RAG expression; however such results are unclear in vivo. The protein is Carbohydrate sulfotransferase 15 (Chst15) of Mus musculus (Mouse).